The primary structure comprises 457 residues: Putative HD domain-containing protein L394 (457 aa).

The 142-residue stretch at Arg-65–Leu-206 folds into the HD domain.

This is Putative HD domain-containing protein L394 from Acanthamoeba polyphaga mimivirus (APMV).